Reading from the N-terminus, the 339-residue chain is Glycerol-3-phosphate dehydrogenase [NAD(P)+] (339 aa).

Positions 15, 16, 36, and 110 each coordinate NADPH. Residues K110, G139, and T141 each contribute to the sn-glycerol 3-phosphate site. A143 is a binding site for NADPH. Sn-glycerol 3-phosphate is bound by residues K195, D248, S258, R259, and N260. K195 functions as the Proton acceptor in the catalytic mechanism. Residue R259 coordinates NADPH. Positions 283 and 285 each coordinate NADPH.

This sequence belongs to the NAD-dependent glycerol-3-phosphate dehydrogenase family.

The protein resides in the cytoplasm. The enzyme catalyses sn-glycerol 3-phosphate + NAD(+) = dihydroxyacetone phosphate + NADH + H(+). It catalyses the reaction sn-glycerol 3-phosphate + NADP(+) = dihydroxyacetone phosphate + NADPH + H(+). The protein operates within membrane lipid metabolism; glycerophospholipid metabolism. Its function is as follows. Catalyzes the reduction of the glycolytic intermediate dihydroxyacetone phosphate (DHAP) to sn-glycerol 3-phosphate (G3P), the key precursor for phospholipid synthesis. This is Glycerol-3-phosphate dehydrogenase [NAD(P)+] from Enterobacter sp. (strain 638).